A 243-amino-acid chain; its full sequence is uncharacterized protein (243 aa).

Positions 120 and 157 each coordinate [4Fe-4S] cluster.

In terms of assembly, homodimer. [4Fe-4S] cluster serves as cofactor.

This is an uncharacterized protein from Methanocaldococcus jannaschii (strain ATCC 43067 / DSM 2661 / JAL-1 / JCM 10045 / NBRC 100440) (Methanococcus jannaschii).